Here is a 295-residue protein sequence, read N- to C-terminus: HTH-type transcriptional regulator TrpI (295 aa).

An HTH lysR-type domain is found at Pro-6–Thr-63. Residues Ile-23 to Arg-42 constitute a DNA-binding region (H-T-H motif).

This sequence belongs to the LysR transcriptional regulatory family. As to quaternary structure, homotetramer.

Activates the expression of the trpBA genes, which encode the two tryptophan synthase subunits, and represses initiation at its own promoter. Acts by binding to two adjacent sites in the intergenic region. In the absence of the inducer indoleglycerol phosphate (InGP), TrpI binds to site I. In the presence of InGP, TrpI binds to site I and site II. Binding to site II is site I dependent. InGP strongly stimulates binding to site II and is required for maximal activation of trpBA. This is HTH-type transcriptional regulator TrpI from Pseudomonas aeruginosa (strain ATCC 15692 / DSM 22644 / CIP 104116 / JCM 14847 / LMG 12228 / 1C / PRS 101 / PAO1).